We begin with the raw amino-acid sequence, 108 residues long: Small cysteine and glycine repeat-containing protein 8 (108 aa).

Residues 4–84 (CGCGGCGGGC…RRTCSSCGCG (81 aa)) form a 12 X 2 AA repeats of CG region.

Belongs to the KRTAP type 28 family.

Its function is as follows. In the hair cortex, hair keratin intermediate filaments are embedded in an interfilamentous matrix, consisting of hair keratin-associated proteins (KRTAP), which are essential for the formation of a rigid and resistant hair shaft through their extensive disulfide bond cross-linking with abundant cysteine residues of hair keratins. The matrix proteins include the high-sulfur and high-glycine-tyrosine keratins. This chain is Small cysteine and glycine repeat-containing protein 8, found in Homo sapiens (Human).